Here is a 102-residue protein sequence, read N- to C-terminus: Keratinocyte differentiation-associated protein (102 aa).

Positions 1–22 (MKIPILPVVALLSLLALHAVQG) are cleaved as a signal peptide.

Expression restricted to suprabasal keratinocytes of the epidermis.

The protein resides in the secreted. Its function is as follows. May act as a soluble regulator of keratinocyte differentiation. May play an important role in embryonic skin morphogenesis. This is Keratinocyte differentiation-associated protein from Mus musculus (Mouse).